The following is a 387-amino-acid chain: Probable serine/threonine-protein kinase PBL18 (387 aa).

The segment at 1–37 (MGNCLDSSARVGNRESTFGGSSRISRKPNQSSRLSSL) is disordered. G2 is lipidated: N-myristoyl glycine. C4 carries S-palmitoyl cysteine lipidation. The span at 14 to 37 (RESTFGGSSRISRKPNQSSRLSSL) shows a compositional bias: polar residues. T73 carries the phosphothreonine modification. Residues 84–365 (FKPNSMIGEG…ADVLSTLQQL (282 aa)) enclose the Protein kinase domain. ATP-binding positions include 90–98 (IGEGGFGCV) and K122. Y167 is subject to Phosphotyrosine. D215 (proton acceptor) is an active-site residue. A Phosphoserine modification is found at S219. A phosphothreonine mark is found at T250 and T255. Residue Y263 is modified to Phosphotyrosine. Residues 368 to 387 (SSKKMGSTQNIVMSPSSHMS) are disordered.

The protein belongs to the protein kinase superfamily. Ser/Thr protein kinase family.

The protein resides in the cell membrane. It catalyses the reaction L-seryl-[protein] + ATP = O-phospho-L-seryl-[protein] + ADP + H(+). It carries out the reaction L-threonyl-[protein] + ATP = O-phospho-L-threonyl-[protein] + ADP + H(+). Functionally, may be involved in plant defense signaling. This Arabidopsis thaliana (Mouse-ear cress) protein is Probable serine/threonine-protein kinase PBL18.